The sequence spans 161 residues: Lipoprotein signal peptidase (161 aa).

4 helical membrane passes run 8 to 28 (LKYF…KYLA), 40 to 60 (ITSF…SLLS), 67 to 87 (QMIM…YLII), and 91 to 111 (ITEK…LGNF). Residues D122 and D140 contribute to the active site. A helical membrane pass occupies residues 136–156 (FNIADSAITCGVVILIAASLF).

The protein belongs to the peptidase A8 family.

The protein localises to the cell inner membrane. It catalyses the reaction Release of signal peptides from bacterial membrane prolipoproteins. Hydrolyzes -Xaa-Yaa-Zaa-|-(S,diacylglyceryl)Cys-, in which Xaa is hydrophobic (preferably Leu), and Yaa (Ala or Ser) and Zaa (Gly or Ala) have small, neutral side chains.. It participates in protein modification; lipoprotein biosynthesis (signal peptide cleavage). Functionally, this protein specifically catalyzes the removal of signal peptides from prolipoproteins. The polypeptide is Lipoprotein signal peptidase (Francisella tularensis subsp. novicida (strain U112)).